We begin with the raw amino-acid sequence, 116 residues long: Large ribosomal subunit protein uL22 (116 aa).

Belongs to the universal ribosomal protein uL22 family. Part of the 50S ribosomal subunit.

In terms of biological role, this protein binds specifically to 23S rRNA; its binding is stimulated by other ribosomal proteins, e.g. L4, L17, and L20. It is important during the early stages of 50S assembly. It makes multiple contacts with different domains of the 23S rRNA in the assembled 50S subunit and ribosome. Its function is as follows. The globular domain of the protein is located near the polypeptide exit tunnel on the outside of the subunit, while an extended beta-hairpin is found that lines the wall of the exit tunnel in the center of the 70S ribosome. This chain is Large ribosomal subunit protein uL22, found in Leptospira biflexa serovar Patoc (strain Patoc 1 / Ames).